Reading from the N-terminus, the 166-residue chain is MDHGFYPSNLDGEGLRIGIVQARFNEPVCAELLEACVAELEKLGVEGEDTLVVTVPGALEIPLALQKMCESGQFDALVALGAVVRGETYHFELVSNESGAGITRVGLDFNVPIANGILTVDTDEQAHARTREKGRDCARAAVEMANLVAALDSLRGQEDEDEDDDE.

Residues Phe-24, 58–60 (ALE), and 82–84 (AVV) each bind 5-amino-6-(D-ribitylamino)uracil. Position 87–88 (87–88 (ET)) interacts with (2S)-2-hydroxy-3-oxobutyl phosphate. Residue His-90 is the Proton donor of the active site. Asn-115 contacts 5-amino-6-(D-ribitylamino)uracil. Arg-129 lines the (2S)-2-hydroxy-3-oxobutyl phosphate pocket.

Belongs to the DMRL synthase family.

The enzyme catalyses (2S)-2-hydroxy-3-oxobutyl phosphate + 5-amino-6-(D-ribitylamino)uracil = 6,7-dimethyl-8-(1-D-ribityl)lumazine + phosphate + 2 H2O + H(+). It participates in cofactor biosynthesis; riboflavin biosynthesis; riboflavin from 2-hydroxy-3-oxobutyl phosphate and 5-amino-6-(D-ribitylamino)uracil: step 1/2. Its function is as follows. Catalyzes the formation of 6,7-dimethyl-8-ribityllumazine by condensation of 5-amino-6-(D-ribitylamino)uracil with 3,4-dihydroxy-2-butanone 4-phosphate. This is the penultimate step in the biosynthesis of riboflavin. This Cupriavidus necator (strain ATCC 17699 / DSM 428 / KCTC 22496 / NCIMB 10442 / H16 / Stanier 337) (Ralstonia eutropha) protein is 6,7-dimethyl-8-ribityllumazine synthase.